The sequence spans 539 residues: GMP synthase [glutamine-hydrolyzing] (539 aa).

The 199-residue stretch at 4 to 202 (KILILDFGSQ…VLQIAGAKPD (199 aa)) folds into the Glutamine amidotransferase type-1 domain. Cys-81 (nucleophile) is an active-site residue. Active-site residues include His-176 and Glu-178. The GMPS ATP-PPase domain maps to 203–395 (WIMKNHIEEA…LGLPPEMVYR (193 aa)). An ATP-binding site is contributed by 230–236 (SGGVDSS).

Homodimer.

The enzyme catalyses XMP + L-glutamine + ATP + H2O = GMP + L-glutamate + AMP + diphosphate + 2 H(+). It participates in purine metabolism; GMP biosynthesis; GMP from XMP (L-Gln route): step 1/1. Catalyzes the synthesis of GMP from XMP. This is GMP synthase [glutamine-hydrolyzing] from Burkholderia orbicola (strain AU 1054).